A 349-amino-acid chain; its full sequence is Sperm acrosomal protein FSA-ACR.1 (349 aa).

Residues 1 to 8 (MKEVYLVG) form the signal peptide. A disordered region spans residues 1–265 (MKEVYLVGYA…EQPSGIPPSS (265 aa)). Residues 63–114 (TSGEHTSVEHASAEHSSTEHTSGEHASGEHTSGERATGEHTSSEHATSEHTS) are compositionally biased toward basic and acidic residues. 2 stretches are compositionally biased toward polar residues: residues 117 to 142 (QPSG…SGEQ) and 154 to 171 (SGEQ…TSGE). Over residues 178-189 (PSGEHAVAEKPS) the composition is skewed to basic and acidic residues. The span at 221 to 248 (EQASIEKASSEQASAEQASAEQASSEQA) shows a compositional bias: low complexity. Residue N342 is glycosylated (N-linked (GlcNAc...) asparagine).

It to acrosomal proteins SP-10. As to expression, testis.

It localises to the cytoplasmic vesicle. It is found in the secretory vesicle. Its subcellular location is the acrosome. The chain is Sperm acrosomal protein FSA-ACR.1 from Vulpes vulpes (Red fox).